Here is a 457-residue protein sequence, read N- to C-terminus: Siroheme synthase (457 aa).

A precorrin-2 dehydrogenase /sirohydrochlorin ferrochelatase region spans residues 1–204 (MDHLPIFCQL…NDQKAITETT (204 aa)). NAD(+)-binding positions include 22–23 (DV) and 43–44 (LA). Ser-128 bears the Phosphoserine mark. Residues 216-457 (GEVVLVGAGP…RDKLNWFSNH (242 aa)) are uroporphyrinogen-III C-methyltransferase. Residue Pro-225 coordinates S-adenosyl-L-methionine. Asp-248 (proton acceptor) is an active-site residue. The active-site Proton donor is the Lys-270. Residues 301 to 303 (GGD), Ile-306, 331 to 332 (TA), Met-382, and Gly-411 contribute to the S-adenosyl-L-methionine site.

The protein in the N-terminal section; belongs to the precorrin-2 dehydrogenase / sirohydrochlorin ferrochelatase family. This sequence in the C-terminal section; belongs to the precorrin methyltransferase family.

It catalyses the reaction uroporphyrinogen III + 2 S-adenosyl-L-methionine = precorrin-2 + 2 S-adenosyl-L-homocysteine + H(+). The enzyme catalyses precorrin-2 + NAD(+) = sirohydrochlorin + NADH + 2 H(+). It carries out the reaction siroheme + 2 H(+) = sirohydrochlorin + Fe(2+). The protein operates within cofactor biosynthesis; adenosylcobalamin biosynthesis; precorrin-2 from uroporphyrinogen III: step 1/1. It functions in the pathway cofactor biosynthesis; adenosylcobalamin biosynthesis; sirohydrochlorin from precorrin-2: step 1/1. It participates in porphyrin-containing compound metabolism; siroheme biosynthesis; precorrin-2 from uroporphyrinogen III: step 1/1. Its pathway is porphyrin-containing compound metabolism; siroheme biosynthesis; siroheme from sirohydrochlorin: step 1/1. The protein operates within porphyrin-containing compound metabolism; siroheme biosynthesis; sirohydrochlorin from precorrin-2: step 1/1. In terms of biological role, multifunctional enzyme that catalyzes the SAM-dependent methylations of uroporphyrinogen III at position C-2 and C-7 to form precorrin-2 via precorrin-1. Then it catalyzes the NAD-dependent ring dehydrogenation of precorrin-2 to yield sirohydrochlorin. Finally, it catalyzes the ferrochelation of sirohydrochlorin to yield siroheme. The protein is Siroheme synthase of Escherichia coli O7:K1 (strain IAI39 / ExPEC).